The following is a 261-amino-acid chain: High-affinity zinc uptake system membrane protein ZnuB (261 aa).

Residues 1–7 lie on the Periplasmic side of the membrane; sequence MIELLFP. A helical transmembrane segment spans residues 8 to 28; sequence GWLAGIMLACAAGPLGSFVVW. Residues 29-53 lie on the Cytoplasmic side of the membrane; the sequence is RRMSYFGDTLAHASLLGVAFGLLLD. A helical transmembrane segment spans residues 54 to 74; the sequence is VNPFYAVIAVTLLLAGGLVWL. The Periplasmic portion of the chain corresponds to 75–83; sequence EKRPQLAID. Residues 84–104 traverse the membrane as a helical segment; sequence TLLGIMAHSALSLGLVVVSLM. Residues 105-121 lie on the Cytoplasmic side of the membrane; it reads SNIRVDLMAYLFGDLLA. Residues 122–142 traverse the membrane as a helical segment; that stretch reads VTPEDLISIAIGVVIVVAILF. The Periplasmic segment spans residues 143–177; sequence WQWRNLLSMTISPDLAFVDGVKLQRVKLLLMLVTA. The chain crosses the membrane as a helical span at residues 178–198; it reads LTIGVAMKFVGALIITSLLII. The Cytoplasmic segment spans residues 199-213; sequence PAATARRFARTPEQM. Residues 214-234 traverse the membrane as a helical segment; the sequence is AGVAVLVGMVAVTGGLTFSAV. A topological domain (periplasmic) is located at residue tyrosine 235. A helical transmembrane segment spans residues 236–256; sequence DTPAGPSVVLCAALLFILSMM. The Cytoplasmic portion of the chain corresponds to 257 to 261; it reads KKQAS.

It belongs to the ABC-3 integral membrane protein family.

The protein resides in the cell inner membrane. In terms of biological role, involved in the high-affinity zinc uptake transport system. In Escherichia coli (strain K12), this protein is High-affinity zinc uptake system membrane protein ZnuB (znuB).